The following is a 1068-amino-acid chain: Protein AF-10 (1068 aa).

Residues 22–74 (IGGCCVCSDERGWAENPLVYCDGHGCSVAVHQACYGIVQVPTGPWFCRKCESQ) form a PHD-type 1 zinc finger. The C2HC pre-PHD-type zinc finger occupies 79–112 (RVRCELCPHKDGALKRTDNGGWAHVVCALYIPEV). The segment at 80–287 (VRCELCPHKD…SLKRLEDTTA (208 aa)) is self-association. Residues 106–190 (ALYIPEVQFA…EGNGADNVQY (85 aa)) form a required for interaction with histone H3 region. The PHD-type 2 zinc-finger motif lies at 135 to 198 (KTCYICDEQG…QYCGYCKYHF (64 aa)). An interaction with FSTL3 region spans residues 141-233 (DEQGRESKAA…QDKHHEKEKK (93 aa)). Residues 206–260 (RGSNRSYDQSLSDSSSHSQDKHHEKEKKKYKEKDKHKQKHKKQPEPSPALVPSLT) are disordered. Residues 211–222 (SYDQSLSDSSSH) show a composition bias toward low complexity. S217 is subject to Phosphoserine. Residues 223–240 (SQDKHHEKEKKKYKEKDK) show a composition bias toward basic and acidic residues. S252 carries the phosphoserine modification. K280 is covalently cross-linked (Glycyl lysine isopeptide (Lys-Gly) (interchain with G-Cter in SUMO2)). The segment covering 291-305 (NANFQEVSAHTSSGK) has biased composition (polar residues). Residues 291–505 (NANFQEVSAH…SSASPTSSVA (215 aa)) are disordered. Over residues 306 to 317 (DVSETRGSEGKG) the composition is skewed to basic and acidic residues. The segment at 311 to 674 (RGSEGKGKKS…QDLGDNSRNL (364 aa)) is DNA-binding. A compositionally biased stretch (low complexity) spans 352 to 372 (SFSGTPGSVKSSSGSSVQSPQ). Polar residues-rich tracts occupy residues 387-396 (YSHSQQSSAT) and 404-446 (SGSQ…SSLP). S436 is modified (phosphoserine). Residues 465 to 483 (EKKRKGNKQSKHGPGRPKG) are compositionally biased toward basic residues. Over residues 490–505 (VSHLSVSSASPTSSVA) the composition is skewed to low complexity. S532 carries the post-translational modification Phosphoserine. Low complexity predominate over residues 583 to 594 (SGSGSSTPVSSS). Disordered stretches follow at residues 583-612 (SGSG…ALSP) and 660-708 (NNQT…SLEN). 2 stretches are compositionally biased toward polar residues: residues 595–604 (HLPQQSSGHL) and 660–673 (NNQT…NSRN). The span at 674–694 (LVGRGSSPRGSLSPRSPVSSL) shows a compositional bias: low complexity. S684, S686, and S689 each carry phosphoserine. The transactivation domain; required for DOT1L-binding stretch occupies residues 703 to 784 (NSSLENLPPV…NAQLSVPFPT (82 aa)). The interval 750–778 (LQVENRRLEEQIKNLTAKKERLQLLNAQL) is leucine-zipper. Over residues 800-814 (AQTAPTTDSLNSSKS) the composition is skewed to polar residues. The interval 800 to 865 (AQTAPTTDSL…SPAQQGSGVS (66 aa)) is disordered. 2 stretches are compositionally biased toward low complexity: residues 834 to 848 (LTSS…SALS) and 855 to 865 (QSPAQQGSGVS).

Self-associates. Interacts with FSTL3 isoform 2; the interaction enhances MLLT10 in vitro transcriptional activity and self-association. Interacts with YEATS4. Interacts with SS18. Interacts with DOT1L; this interaction also occurs with the KMT2A/MLL1 fusion protein. Interacts with histone H3; interaction is necessary for MLLT10 binding to nucleosomes; interaction is inhibited by histone H3 'Lys-27' methylations (H3K27me1, H3K27me2 and H3K27me3) amd acetylation; interaction stabilizes association of MLLT10 at chromatin; interaction is essential for histone H3 'Lys-79' dimethylation (H3K79me2). As to expression, expressed abundantly in testis.

The protein localises to the nucleus. Its function is as follows. Probably involved in transcriptional regulation. In vitro or as fusion protein with KMT2A/MLL1 has transactivation activity. Binds to cruciform DNA. In cells, binding to unmodified histone H3 regulates DOT1L functions including histone H3 'Lys-79' dimethylation (H3K79me2) and gene activation. The polypeptide is Protein AF-10 (Homo sapiens (Human)).